The following is a 1639-amino-acid chain: RIMS-binding protein 3A (1639 aa).

Disordered stretches follow at residues methionine 1–alanine 22, glycine 215–proline 240, and serine 295–serine 364. The stretch at proline 21–leucine 143 forms a coiled coil. The segment covering serine 326–serine 339 has biased composition (pro residues). 2 coiled-coil regions span residues glutamine 409 to asparagine 442 and leucine 480 to asparagine 619. Residues cysteine 697–aspartate 811 form a disordered region. Composition is skewed to polar residues over residues tryptophan 707 to lysine 718 and serine 761 to leucine 775. The segment covering serine 776–serine 790 has biased composition (low complexity). The SH3 1 domain maps to proline 832–aspartate 899. 2 Fibronectin type-III domains span residues alanine 995–alanine 1083 and proline 1088–aspartate 1184. Disordered regions lie at residues proline 1251 to serine 1273 and glutamine 1292 to leucine 1330. Residues lysine 1293 to aspartate 1305 show a composition bias toward polar residues. SH3 domains lie at threonine 1452 to valine 1520 and tryptophan 1569 to leucine 1636.

This sequence belongs to the RIMBP family. Interacts with LRGUK (via guanylate kinase-like domain). Interacts (via C-terminus) with HOOK1 (via coiled-coil region).

Its subcellular location is the cytoplasm. It localises to the cytoskeleton. Its function is as follows. Probable component of the manchette, a microtubule-based structure which plays a key role in sperm head morphogenesis during late stages of sperm development. In Homo sapiens (Human), this protein is RIMS-binding protein 3A (RIMBP3).